A 353-amino-acid polypeptide reads, in one-letter code: Protein-glutamate methylesterase/protein-glutamine glutaminase (353 aa).

Residues 6–123 (RVLVIDDSAL…ARGLKAMLSE (118 aa)) form the Response regulatory domain. At D57 the chain carries 4-aspartylphosphate. The 193-residue stretch at 159–351 (AESTDKVIAI…PRIVDLLSER (193 aa)) folds into the CheB-type methylesterase domain. Active-site residues include S171, H197, and D293.

Belongs to the CheB family. Post-translationally, phosphorylated by CheA. Phosphorylation of the N-terminal regulatory domain activates the methylesterase activity.

The protein resides in the cytoplasm. The enzyme catalyses [protein]-L-glutamate 5-O-methyl ester + H2O = L-glutamyl-[protein] + methanol + H(+). It catalyses the reaction L-glutaminyl-[protein] + H2O = L-glutamyl-[protein] + NH4(+). In terms of biological role, involved in chemotaxis. Part of a chemotaxis signal transduction system that modulates chemotaxis in response to various stimuli. Catalyzes the demethylation of specific methylglutamate residues introduced into the chemoreceptors (methyl-accepting chemotaxis proteins or MCP) by CheR. Also mediates the irreversible deamidation of specific glutamine residues to glutamic acid. This is Protein-glutamate methylesterase/protein-glutamine glutaminase from Syntrophotalea carbinolica (strain DSM 2380 / NBRC 103641 / GraBd1) (Pelobacter carbinolicus).